Consider the following 452-residue polypeptide: UDP-N-acetylmuramoylalanine--D-glutamate ligase (452 aa).

115-121 contacts ATP; that stretch reads GTNGKTT.

The protein belongs to the MurCDEF family.

It localises to the cytoplasm. It catalyses the reaction UDP-N-acetyl-alpha-D-muramoyl-L-alanine + D-glutamate + ATP = UDP-N-acetyl-alpha-D-muramoyl-L-alanyl-D-glutamate + ADP + phosphate + H(+). It participates in cell wall biogenesis; peptidoglycan biosynthesis. Its function is as follows. Cell wall formation. Catalyzes the addition of glutamate to the nucleotide precursor UDP-N-acetylmuramoyl-L-alanine (UMA). The sequence is that of UDP-N-acetylmuramoylalanine--D-glutamate ligase from Citrifermentans bemidjiense (strain ATCC BAA-1014 / DSM 16622 / JCM 12645 / Bem) (Geobacter bemidjiensis).